We begin with the raw amino-acid sequence, 386 residues long: MSRSWISKRESKILYILLTTTELYLKTGQPVGSKTLKEYECSNLSTATIRNYFSELESEGFLKKNHISGGRIPTDLAFRYYVDHCADFSQSELPESTTRLLNQLPEESQNIVKDLQKALEILGEALQLPTCFSSPRFENDSITNIQISLVDEQRVVVILSTEFGQVFTETLWLPETSSPASVKRIETFLQSYVRKQPPTEILSQKEEDLGMTLYNEVVVRYLTRYCNFSEEDLYQTGLSKLLKYDAFKDPDTLALGLSFFENRRHMCKLLDIGMHRDRPTAFIGNELSTIFGTPNPQCAVITTPYYMNRTPLGAFGVLGPINLPYREIFQTLTIFADKVKDSLTQSFYKFKLSFRRPCPSDPKLSKEPTLLARYSSIKLLPPKETS.

This sequence belongs to the HrcA family.

Functionally, negative regulator of class I heat shock genes (grpE-dnaK-dnaJ and groELS operons). Prevents heat-shock induction of these operons. This is Heat-inducible transcription repressor HrcA from Chlamydia felis (strain Fe/C-56) (Chlamydophila felis).